The sequence spans 434 residues: Serine/threonine transporter SstT (434 aa).

A run of 9 helical transmembrane segments spans residues 14–34 (IVIGIIVGAVLGVMVPSWSFI), 41–61 (FVGALKAIAPLLVFLLIMSAI), 72–92 (FGTVIVLYLSATLFSSIAAVA), 135–155 (ALVEGNYLAILFWSLLIGSGL), 172–192 (TVSAVAQNVIQFAPFGIVGLL), 210–230 (LLMLLVATMVFVYLVVYPFMV), 282–302 (ISIPLGGSANSGGAAITVSIM), 316–336 (IFLALLLCFLSAISATGVSGI), and 351–371 (FGISNDIAMQVVGIGFIIGVV). The interval 414–434 (KGTAEVVTPEKANEAEESEQV) is disordered.

Belongs to the dicarboxylate/amino acid:cation symporter (DAACS) (TC 2.A.23) family.

The protein resides in the cell membrane. The catalysed reaction is L-serine(in) + Na(+)(in) = L-serine(out) + Na(+)(out). The enzyme catalyses L-threonine(in) + Na(+)(in) = L-threonine(out) + Na(+)(out). Its function is as follows. Involved in the import of serine and threonine into the cell, with the concomitant import of sodium (symport system). This is Serine/threonine transporter SstT from Lacticaseibacillus paracasei (strain ATCC 334 / BCRC 17002 / CCUG 31169 / CIP 107868 / KCTC 3260 / NRRL B-441) (Lactobacillus paracasei).